We begin with the raw amino-acid sequence, 173 residues long: Regulator of ribonuclease activity A (173 aa).

The protein belongs to the RraA family. Homotrimer. Binds to both RNA-binding sites in the C-terminal region of Rne and to RhlB.

It is found in the cytoplasm. Its function is as follows. Globally modulates RNA abundance by binding to RNase E (Rne) and regulating its endonucleolytic activity. Can modulate Rne action in a substrate-dependent manner by altering the composition of the degradosome. Modulates RNA-binding and helicase activities of the degradosome. The polypeptide is Regulator of ribonuclease activity A (Vibrio vulnificus (strain YJ016)).